Here is a 106-residue protein sequence, read N- to C-terminus: ATP-dependent Clp protease adapter protein ClpS (106 aa).

Belongs to the ClpS family. In terms of assembly, binds to the N-terminal domain of the chaperone ClpA.

Functionally, involved in the modulation of the specificity of the ClpAP-mediated ATP-dependent protein degradation. The sequence is that of ATP-dependent Clp protease adapter protein ClpS from Sodalis glossinidius (strain morsitans).